We begin with the raw amino-acid sequence, 25 residues long: Caerin-2.5 (25 aa).

In terms of tissue distribution, expressed by the skin parotoid and/or rostral glands.

Its subcellular location is the secreted. Antibacterial peptide, that adopts an alpha helical conformation which can disrupt bacterial membranes. Each caerin displays a different antimicrobial specificity. This Ranoidea gilleni (Centralian tree frog) protein is Caerin-2.5.